A 473-amino-acid chain; its full sequence is Bifunctional protein HldE (473 aa).

Residues methionine 1–glutamate 318 form a ribokinase region. Asparagine 194–glutamate 197 provides a ligand contact to ATP. Aspartate 263 is an active-site residue. Residues phenylalanine 343–asparagine 473 are cytidylyltransferase.

The protein in the N-terminal section; belongs to the carbohydrate kinase PfkB family. In the C-terminal section; belongs to the cytidylyltransferase family. Homodimer.

The catalysed reaction is D-glycero-beta-D-manno-heptose 7-phosphate + ATP = D-glycero-beta-D-manno-heptose 1,7-bisphosphate + ADP + H(+). It carries out the reaction D-glycero-beta-D-manno-heptose 1-phosphate + ATP + H(+) = ADP-D-glycero-beta-D-manno-heptose + diphosphate. It participates in nucleotide-sugar biosynthesis; ADP-L-glycero-beta-D-manno-heptose biosynthesis; ADP-L-glycero-beta-D-manno-heptose from D-glycero-beta-D-manno-heptose 7-phosphate: step 1/4. The protein operates within nucleotide-sugar biosynthesis; ADP-L-glycero-beta-D-manno-heptose biosynthesis; ADP-L-glycero-beta-D-manno-heptose from D-glycero-beta-D-manno-heptose 7-phosphate: step 3/4. Its function is as follows. Catalyzes the phosphorylation of D-glycero-D-manno-heptose 7-phosphate at the C-1 position to selectively form D-glycero-beta-D-manno-heptose-1,7-bisphosphate. Catalyzes the ADP transfer from ATP to D-glycero-beta-D-manno-heptose 1-phosphate, yielding ADP-D-glycero-beta-D-manno-heptose. The sequence is that of Bifunctional protein HldE from Pseudomonas putida (strain GB-1).